Here is a 247-residue protein sequence, read N- to C-terminus: tRNA pseudouridine synthase A (247 aa).

Catalysis depends on aspartate 57, which acts as the Nucleophile. Substrate is bound at residue tyrosine 115.

This sequence belongs to the tRNA pseudouridine synthase TruA family. As to quaternary structure, homodimer.

It catalyses the reaction uridine(38/39/40) in tRNA = pseudouridine(38/39/40) in tRNA. Formation of pseudouridine at positions 38, 39 and 40 in the anticodon stem and loop of transfer RNAs. The chain is tRNA pseudouridine synthase A from Chlorobaculum tepidum (strain ATCC 49652 / DSM 12025 / NBRC 103806 / TLS) (Chlorobium tepidum).